The primary structure comprises 277 residues: Thymidylate synthase (277 aa).

A dUMP-binding site is contributed by Arg-21. His-51 provides a ligand contact to (6R)-5,10-methylene-5,6,7,8-tetrahydrofolate. Arg-126 to Arg-127 contributes to the dUMP binding site. Cys-159 serves as the catalytic Nucleophile. DUMP contacts are provided by residues Arg-179–Asp-182, Asn-190, and His-220–Tyr-222. A (6R)-5,10-methylene-5,6,7,8-tetrahydrofolate-binding site is contributed by Asp-182. Ser-276 provides a ligand contact to (6R)-5,10-methylene-5,6,7,8-tetrahydrofolate.

It belongs to the thymidylate synthase family. Bacterial-type ThyA subfamily. Homodimer.

It is found in the cytoplasm. The enzyme catalyses dUMP + (6R)-5,10-methylene-5,6,7,8-tetrahydrofolate = 7,8-dihydrofolate + dTMP. The protein operates within pyrimidine metabolism; dTTP biosynthesis. Functionally, catalyzes the reductive methylation of 2'-deoxyuridine-5'-monophosphate (dUMP) to 2'-deoxythymidine-5'-monophosphate (dTMP) while utilizing 5,10-methylenetetrahydrofolate (mTHF) as the methyl donor and reductant in the reaction, yielding dihydrofolate (DHF) as a by-product. This enzymatic reaction provides an intracellular de novo source of dTMP, an essential precursor for DNA biosynthesis. This is Thymidylate synthase from Teredinibacter turnerae (strain ATCC 39867 / T7901).